Reading from the N-terminus, the 191-residue chain is ATP-dependent Clp protease proteolytic subunit 1 (191 aa).

The active-site Nucleophile is the S91. The active site involves H116.

It belongs to the peptidase S14 family. As to quaternary structure, fourteen ClpP subunits assemble into 2 heptameric rings which stack back to back to give a disk-like structure with a central cavity, resembling the structure of eukaryotic proteasomes.

It is found in the cytoplasm. The enzyme catalyses Hydrolysis of proteins to small peptides in the presence of ATP and magnesium. alpha-casein is the usual test substrate. In the absence of ATP, only oligopeptides shorter than five residues are hydrolyzed (such as succinyl-Leu-Tyr-|-NHMec, and Leu-Tyr-Leu-|-Tyr-Trp, in which cleavage of the -Tyr-|-Leu- and -Tyr-|-Trp bonds also occurs).. Functionally, cleaves peptides in various proteins in a process that requires ATP hydrolysis. Has a chymotrypsin-like activity. Plays a major role in the degradation of misfolded proteins. This is ATP-dependent Clp protease proteolytic subunit 1 from Chlamydia pneumoniae (Chlamydophila pneumoniae).